Here is a 111-residue protein sequence, read N- to C-terminus: Probable 4-amino-4-deoxy-L-arabinose-phosphoundecaprenol flippase subunit ArnE (111 aa).

The Cytoplasmic portion of the chain corresponds to Met-1–His-35. The chain crosses the membrane as a helical span at residues Ile-36–Leu-56. Residues Leu-40–Ser-109 enclose the EamA domain. Residues Val-57 to Asn-60 are Periplasmic-facing. A helical transmembrane segment spans residues Val-61–Ala-81. Residues Val-82–Glu-87 lie on the Cytoplasmic side of the membrane. A helical membrane pass occupies residues Pro-88–Gly-108. Residues Ser-109–Val-111 lie on the Periplasmic side of the membrane.

Belongs to the ArnE family. In terms of assembly, heterodimer of ArnE and ArnF.

It is found in the cell inner membrane. It functions in the pathway bacterial outer membrane biogenesis; lipopolysaccharide biosynthesis. In terms of biological role, translocates 4-amino-4-deoxy-L-arabinose-phosphoundecaprenol (alpha-L-Ara4N-phosphoundecaprenol) from the cytoplasmic to the periplasmic side of the inner membrane. This Escherichia coli O6:H1 (strain CFT073 / ATCC 700928 / UPEC) protein is Probable 4-amino-4-deoxy-L-arabinose-phosphoundecaprenol flippase subunit ArnE.